A 212-amino-acid chain; its full sequence is Protein-L-isoaspartate O-methyltransferase (212 aa).

The active site involves serine 60.

Belongs to the methyltransferase superfamily. L-isoaspartyl/D-aspartyl protein methyltransferase family.

The protein localises to the cytoplasm. The enzyme catalyses [protein]-L-isoaspartate + S-adenosyl-L-methionine = [protein]-L-isoaspartate alpha-methyl ester + S-adenosyl-L-homocysteine. Functionally, catalyzes the methyl esterification of L-isoaspartyl residues in peptides and proteins that result from spontaneous decomposition of normal L-aspartyl and L-asparaginyl residues. It plays a role in the repair and/or degradation of damaged proteins. In Methylorubrum populi (strain ATCC BAA-705 / NCIMB 13946 / BJ001) (Methylobacterium populi), this protein is Protein-L-isoaspartate O-methyltransferase.